The sequence spans 245 residues: Carbohydrate deacetylase 1 (245 aa).

Mg(2+) is bound by residues His59 and His125.

This sequence belongs to the YdjC deacetylase family. In terms of assembly, homodimer. The cofactor is Mg(2+).

Its function is as follows. Probably catalyzes the deacetylation of acetylated carbohydrates an important step in the degradation of oligosaccharides. The sequence is that of Carbohydrate deacetylase 1 from Listeria innocua serovar 6a (strain ATCC BAA-680 / CLIP 11262).